A 177-amino-acid polypeptide reads, in one-letter code: Small ribosomal subunit protein bS21m (177 aa).

The transit peptide at 1 to 17 (MLKSTLRLSRISLRRGF) directs the protein to the mitochondrion.

Belongs to the bacterial ribosomal protein bS21 family. As to quaternary structure, component of the mitochondrial small ribosomal subunit (mt-SSU). Mature yeast 74S mitochondrial ribosomes consist of a small (37S) and a large (54S) subunit. The 37S small subunit contains a 15S ribosomal RNA (15S mt-rRNA) and 34 different proteins. The 54S large subunit contains a 21S rRNA (21S mt-rRNA) and 46 different proteins.

It is found in the mitochondrion. Its function is as follows. Component of the mitochondrial ribosome (mitoribosome), a dedicated translation machinery responsible for the synthesis of mitochondrial genome-encoded proteins, including at least some of the essential transmembrane subunits of the mitochondrial respiratory chain. The mitoribosomes are attached to the mitochondrial inner membrane and translation products are cotranslationally integrated into the membrane. The chain is Small ribosomal subunit protein bS21m (MRP21) from Saccharomyces cerevisiae (strain ATCC 204508 / S288c) (Baker's yeast).